Consider the following 201-residue polypeptide: Putative ankyrin repeat protein R868 (201 aa).

ANK repeat units follow at residues 125–154 and 156–188; these read YENN…NCYF and KAKK…DYNF.

The protein is Putative ankyrin repeat protein R868 of Acanthamoeba polyphaga (Amoeba).